We begin with the raw amino-acid sequence, 445 residues long: DILAAFRVTPQPGVPPEEAGAAVAAESSTGTWTTVWTDGLTSLDRYKGRCYHIEPVLGEKDQYICYVAYPLDLFEEGSVTNMFTSIVGNVFGFKALRALRLEDLRIPTAYVKTFQGPPHGIQVERDKLNKYGRPLLGCTIKPKLGLSAKNYGRAVYECLRGGLDFTKDDENVNSQPFMRWRDXFLFCAEALYKAQCETGEIKGHYLNATAGTCEEMMKRAIFARELGVPIVMHDYLTGGFTANTTLAHYCRDNGLLLHIHRAMHAVIDRQKNHGMTFRVLAKALRMSGGDHIHAGTVVGKLEGERDITLGFVDLLRDDFIEKDRSRGIYFTQDWVSLPGVIPVASGGIHVXHMPALTEIFGDDAVLQFGGGTLGHPWGNAPGAVANRVALEACVKARNEGRDLAAEGNVIIREXSKWSPELAAACEVWKEIKFEFKAVDTLDPEK.

Substrate is bound by residues N89 and T139. K141 functions as the Proton acceptor in the catalytic mechanism. K143 provides a ligand contact to substrate. Mg(2+)-binding residues include K167, D169, and E170. An N6-carboxylysine modification is found at K167. H260 (proton acceptor) is an active-site residue. Substrate contacts are provided by R261, H293, and S345.

Belongs to the RuBisCO large chain family. Type I subfamily. In terms of assembly, heterohexadecamer of 8 large chains and 8 small chains; disulfide-linked. The disulfide link is formed within the large subunit homodimers. Mg(2+) is required as a cofactor. Post-translationally, the disulfide bond which can form in the large chain dimeric partners within the hexadecamer appears to be associated with oxidative stress and protein turnover.

Its subcellular location is the plastid. It is found in the chloroplast. The enzyme catalyses 2 (2R)-3-phosphoglycerate + 2 H(+) = D-ribulose 1,5-bisphosphate + CO2 + H2O. It catalyses the reaction D-ribulose 1,5-bisphosphate + O2 = 2-phosphoglycolate + (2R)-3-phosphoglycerate + 2 H(+). In terms of biological role, ruBisCO catalyzes two reactions: the carboxylation of D-ribulose 1,5-bisphosphate, the primary event in carbon dioxide fixation, as well as the oxidative fragmentation of the pentose substrate in the photorespiration process. Both reactions occur simultaneously and in competition at the same active site. The protein is Ribulose bisphosphate carboxylase large chain of Callicarpa dichotoma (Purple beautyberry).